Consider the following 296-residue polypeptide: Acetyl-coenzyme A carboxylase carboxyl transferase subunit beta (296 aa).

In terms of domain architecture, CoA carboxyltransferase N-terminal spans 26 to 295; sequence VWTKCTNCEQ…PFKVGELIIE (270 aa). Positions 30, 33, 49, and 52 each coordinate Zn(2+). Residues 30 to 52 form a C4-type zinc finger; the sequence is CTNCEQVLYSEELKRNMQVCPKC.

This sequence belongs to the AccD/PCCB family. In terms of assembly, acetyl-CoA carboxylase is a heterohexamer composed of biotin carboxyl carrier protein (AccB), biotin carboxylase (AccC) and two subunits each of ACCase subunit alpha (AccA) and ACCase subunit beta (AccD). Zn(2+) serves as cofactor.

It localises to the cytoplasm. The catalysed reaction is N(6)-carboxybiotinyl-L-lysyl-[protein] + acetyl-CoA = N(6)-biotinyl-L-lysyl-[protein] + malonyl-CoA. It functions in the pathway lipid metabolism; malonyl-CoA biosynthesis; malonyl-CoA from acetyl-CoA: step 1/1. Its function is as follows. Component of the acetyl coenzyme A carboxylase (ACC) complex. Biotin carboxylase (BC) catalyzes the carboxylation of biotin on its carrier protein (BCCP) and then the CO(2) group is transferred by the transcarboxylase to acetyl-CoA to form malonyl-CoA. The chain is Acetyl-coenzyme A carboxylase carboxyl transferase subunit beta from Haemophilus ducreyi (strain 35000HP / ATCC 700724).